Here is a 268-residue protein sequence, read N- to C-terminus: Malonyl-[acyl-carrier protein] O-methyltransferase (268 aa).

This sequence belongs to the methyltransferase superfamily.

The enzyme catalyses malonyl-[ACP] + S-adenosyl-L-methionine = malonyl-[ACP] methyl ester + S-adenosyl-L-homocysteine. It functions in the pathway cofactor biosynthesis; biotin biosynthesis. In terms of biological role, converts the free carboxyl group of a malonyl-thioester to its methyl ester by transfer of a methyl group from S-adenosyl-L-methionine (SAM). It allows to synthesize pimeloyl-ACP via the fatty acid synthetic pathway. In Prosthecochloris aestuarii (strain DSM 271 / SK 413), this protein is Malonyl-[acyl-carrier protein] O-methyltransferase.